Consider the following 163-residue polypeptide: NADH-quinone oxidoreductase subunit I (163 aa).

4Fe-4S ferredoxin-type domains are found at residues 53–83 and 94–123; these read LRRY…IEAG and VRYD…EGPN. Cys63, Cys66, Cys69, Cys73, Cys103, Cys106, Cys109, and Cys113 together coordinate [4Fe-4S] cluster.

The protein belongs to the complex I 23 kDa subunit family. As to quaternary structure, NDH-1 is composed of 14 different subunits. Subunits NuoA, H, J, K, L, M, N constitute the membrane sector of the complex. [4Fe-4S] cluster serves as cofactor.

The protein localises to the cell inner membrane. The catalysed reaction is a quinone + NADH + 5 H(+)(in) = a quinol + NAD(+) + 4 H(+)(out). NDH-1 shuttles electrons from NADH, via FMN and iron-sulfur (Fe-S) centers, to quinones in the respiratory chain. The immediate electron acceptor for the enzyme in this species is believed to be ubiquinone. Couples the redox reaction to proton translocation (for every two electrons transferred, four hydrogen ions are translocated across the cytoplasmic membrane), and thus conserves the redox energy in a proton gradient. The protein is NADH-quinone oxidoreductase subunit I of Agrobacterium fabrum (strain C58 / ATCC 33970) (Agrobacterium tumefaciens (strain C58)).